The sequence spans 254 residues: MASRAFAAVFAAVALVVCSSVLPRALASDPSQLQDFCVADKLSAVFVNGFVCKNPKQVTANDFFLPKALGVPGNTVNAQGSAVTPVTVNELPGLNTLGISFARIDFAPNGQNPPHTHPRATEILTVLQGTLLVGFVTSNQPGGGNLQFTKLLGPGDVFVFPQGLIHFQLNNGAVPAVAIAALSSQNPGVITIANAVFGSTPPILDDVLAKAFMIDKDQVDWIQAKFAAPPAASGGGGGFIGGGGGGGFPGGGAP.

Positions 1-27 (MASRAFAAVFAAVALVVCSSVLPRALA) are cleaved as a signal peptide. Cys-37 and Cys-52 are oxidised to a cystine. The 154-residue stretch at 67–220 (KALGVPGNTV…AFMIDKDQVD (154 aa)) folds into the Cupin type-1 domain. Residues His-115, His-117, Glu-122, and His-166 each contribute to the Mn(2+) site.

Belongs to the germin family. Oligomer (believed to be a pentamer but probably hexamer).

The protein localises to the secreted. It is found in the extracellular space. It localises to the apoplast. In terms of biological role, may play a role in plant defense. Probably has no oxalate oxidase activity even if the active site is conserved. This Oryza sativa subsp. japonica (Rice) protein is Germin-like protein 4-1.